Consider the following 481-residue polypeptide: RAC-beta serine/threonine-protein kinase (481 aa).

At methionine 1 the chain carries N-acetylmethionine. The PH domain maps to serine 5–asparagine 108. Phosphoserine is present on serine 34. The cysteines at positions 60 and 77 are disulfide-linked. At serine 126 the chain carries Phosphoserine. Serine 128 and serine 131 each carry an O-linked (GlcNAc) serine glycan. One can recognise a Protein kinase domain in the interval phenylalanine 152–phenylalanine 409. ATP-binding positions include leucine 158–valine 166 and lysine 181. Aspartate 275 serves as the catalytic Proton acceptor. Residues asparagine 280 and aspartate 293 each coordinate Mn(2+). A disulfide bridge links cysteine 297 with cysteine 311. O-linked (GlcNAc) threonine glycosylation is present at threonine 306. Phosphothreonine; by PDPK1 is present on threonine 309. Threonine 313 carries an O-linked (GlcNAc) threonine glycan. The 72-residue stretch at leucine 410–glutamate 481 folds into the AGC-kinase C-terminal domain. Residue serine 447 is modified to Phosphoserine. Threonine 451 carries the phosphothreonine modification. Phosphoserine; by MTOR is present on residues serine 474 and serine 478. Serine 474 is a glycosylation site (O-linked (GlcNAc) serine; alternate).

This sequence belongs to the protein kinase superfamily. AGC Ser/Thr protein kinase family. RAC subfamily. As to quaternary structure, interacts with BTBD10. Interacts with KCTD20. Interacts (via PH domain) with MTCP1, TCL1A and TCL1B; this interaction may facilitate AKT2 oligomerization and phosphorylation, hence increasing kinase activity. Interacts with PHB2; this interaction may be important for myogenic differentiation. Interacts (when phosphorylated) with CLIP3/ClipR-59; this interaction promotes cell membrane localization. Interacts with WDFY2 (via WD repeats 1-3). Phosphorylation on Thr-309 and Ser-474 is required for full activity. Phosphorylation of the activation loop at Thr-309 by PDPK1/PDK1 is a prerequisite for full activation. Phosphorylated and activated by PDPK1/PDK1 in the presence of phosphatidylinositol 3,4,5-trisphosphate. Phosphorylation by mTORC2 in response to growth factors plays a key role in AKT1 activation: mTORC2 phosphorylates different sites depending on the context, such as Ser-474 or Ser-478, thereby facilitating subsequent phosphorylation of the activation loop by PDPK1/PDK1. In terms of processing, ubiquitinated; undergoes both 'Lys-48'- and 'Lys-63'-linked polyubiquitination. TRAF6-induced 'Lys-63'-linked AKT2 ubiquitination. When fully phosphorylated and translocated into the nucleus, undergoes 'Lys-48'-polyubiquitination catalyzed by TTC3, leading to its degradation by the proteasome. Post-translationally, O-GlcNAcylation at Thr-306 and Thr-313 inhibits activating phosphorylation at Thr-309 via disrupting the interaction between AKT and PDPK1/PDK1.

It is found in the cytoplasm. It localises to the nucleus. The protein resides in the cell membrane. The protein localises to the early endosome. The catalysed reaction is L-seryl-[protein] + ATP = O-phospho-L-seryl-[protein] + ADP + H(+). It catalyses the reaction L-threonyl-[protein] + ATP = O-phospho-L-threonyl-[protein] + ADP + H(+). Its activity is regulated as follows. Two specific sites, one in the kinase domain (Thr-309) and the other in the C-terminal regulatory region (Ser-474), need to be phosphorylated for its full activation. AKT2 phosphorylation of PKP1 is induced by insulin. Inhibited by Akt inhibitor MK2206. In terms of biological role, AKT2 is one of 3 closely related serine/threonine-protein kinases (AKT1, AKT2 and AKT3) called the AKT kinases, and which regulate many processes including metabolism, proliferation, cell survival, growth and angiogenesis. This is mediated through serine and/or threonine phosphorylation of a range of downstream substrates. Over 100 substrate candidates have been reported so far, but for most of them, no isoform specificity has been reported. AKT is responsible of the regulation of glucose uptake by mediating insulin-induced translocation of the SLC2A4/GLUT4 glucose transporter to the cell surface. Phosphorylation of PTPN1 at 'Ser-50' negatively modulates its phosphatase activity preventing dephosphorylation of the insulin receptor and the attenuation of insulin signaling. Phosphorylation of TBC1D4 triggers the binding of this effector to inhibitory 14-3-3 proteins, which is required for insulin-stimulated glucose transport. AKT also regulates the storage of glucose in the form of glycogen by phosphorylating GSK3A at 'Ser-21' and GSK3B at 'Ser-9', resulting in inhibition of its kinase activity. Phosphorylation of GSK3 isoforms by AKT is also thought to be one mechanism by which cell proliferation is driven. AKT also regulates cell survival via the phosphorylation of MAP3K5 (apoptosis signal-related kinase). Phosphorylation of 'Ser-83' decreases MAP3K5 kinase activity stimulated by oxidative stress and thereby prevents apoptosis. AKT mediates insulin-stimulated protein synthesis by phosphorylating TSC2 at 'Ser-939' and 'Thr-1462', thereby activating mTORC1 signaling and leading to both phosphorylation of 4E-BP1 and in activation of RPS6KB1. AKT is involved in the phosphorylation of members of the FOXO factors (Forkhead family of transcription factors), leading to binding of 14-3-3 proteins and cytoplasmic localization. In particular, FOXO1 is phosphorylated at 'Thr-24', 'Ser-256' and 'Ser-319'. FOXO3 and FOXO4 are phosphorylated on equivalent sites. AKT has an important role in the regulation of NF-kappa-B-dependent gene transcription and positively regulates the activity of CREB1 (cyclic AMP (cAMP)-response element binding protein). The phosphorylation of CREB1 induces the binding of accessory proteins that are necessary for the transcription of pro-survival genes such as BCL2 and MCL1. AKT phosphorylates 'Ser-454' on ATP citrate lyase (ACLY), thereby potentially regulating ACLY activity and fatty acid synthesis. Activates the 3B isoform of cyclic nucleotide phosphodiesterase (PDE3B) via phosphorylation of 'Ser-273', resulting in reduced cyclic AMP levels and inhibition of lipolysis. Phosphorylates PIKFYVE on 'Ser-318', which results in increased PI(3)P-5 activity. The Rho GTPase-activating protein DLC1 is another substrate and its phosphorylation is implicated in the regulation cell proliferation and cell growth. AKT plays a role as key modulator of the AKT-mTOR signaling pathway controlling the tempo of the process of newborn neurons integration during adult neurogenesis, including correct neuron positioning, dendritic development and synapse formation. Signals downstream of phosphatidylinositol 3-kinase (PI(3)K) to mediate the effects of various growth factors such as platelet-derived growth factor (PDGF), epidermal growth factor (EGF), insulin and insulin-like growth factor I (IGF-I). AKT mediates the antiapoptotic effects of IGF-I. Essential for the SPATA13-mediated regulation of cell migration and adhesion assembly and disassembly. May be involved in the regulation of the placental development. In response to lysophosphatidic acid stimulation, inhibits the ciliogenesis cascade. In this context, phosphorylates WDR44, hence stabilizing its interaction with Rab11 and preventing the formation of the ciliogenic Rab11-FIP3-RAB3IP complex. Also phosphorylates RAB3IP/Rabin8, thus may affect RAB3IP guanine nucleotide exchange factor (GEF) activity toward Rab8, which is important for cilia growth. Phosphorylates PKP1, facilitating its interaction with YWHAG and translocation to the nucleus, ultimately resulting in a reduction in keratinocyte intercellular adhesion. Phosphorylation of PKP1 increases PKP1 protein stability, translocation to the cytoplasm away from desmosome plaques and PKP1-driven cap-dependent translation. Functionally, several AKT2-specific substrates have been identified, including ANKRD2, C2CD5, CLK2 and PITX2. May play a role in myoblast differentiation. In this context, may act through PITX2 phosphorylation. Unphosphorylated PITX2 associates with an ELAVL1/HuR-containing complex, which stabilizes cyclin mRNA and ensuring cell proliferation. Phosphorylation by AKT2 impairs this association, leading to CCND1 mRNA destabilization and progression towards differentiation. Also involved in the negative regulation of myogenesis in response to stress conditions. In this context, acts by phosphorylating ANKRD2. May also be a key regulator of glucose uptake. Regulates insulin-stimulated glucose transport by the increase of glucose transporter GLUT4 translocation from intracellular stores to the plasma membrane. In this context, acts by phosphorylating C2CD5/CDP138 on 'Ser-197' in insulin-stimulated adipocytes. Through the phosphorylation of CLK2 on 'Thr-343', involved in insulin-regulated suppression of hepatic gluconeogenesis. In Mus musculus (Mouse), this protein is RAC-beta serine/threonine-protein kinase (Akt2).